Consider the following 1649-residue polypeptide: MMGSTFKRKISKVTVKVASPEVIRSWSSGEVKKPETINYRTFKPEKDGLFCEKIFGPTKDYECACGKYKGKKYEGTVCERCGVRVESKEARRKRMGHIDLFAPVVHVWYLKSSPSILSSLLGIQAKELENVIYYGGKRIIEKILIVTNPKDTDFIKGSLLYQTEYEIYNQKLDFEVMPGVIIKSPVAPVISSISGEVKIRHEKTHTDREITWVDVRKISRAEHRVYNGMVLNVKNGDYVNQGDEIVSEMQIDPIYAPFDGTVEIDEISNTITIKPLTTSKDMPVTFSLPYGVKPVVPNNSKVKKGDQLTNGTVLPAVIASVSGNISFGKELNVRPLEDGKYEVLTSGSVYVENVVEEKHYPLFEGAFVYVKDGDEISEGQTIADRFLFEDEYLTLDEYKIFEQHYPAMFTAESEVENDRPIVVITEIDDEVSVETGLKIGDIITDHQYSAYRTLYNDKIEADSGASAIKKLLQKLDLEKLKAEIESELKKVSKSSGRAKKLLRRLKIVKDLLKSETKPEWMILEAIPVVPPDIRPMIQVEGGRFATTDLNDLYRRVINRNNRLKKLYEMNSPEIIIKNEKRMLQEAVDSLIYNGRMGKAVTDRNGRALKSLTDLLKGKKGRFRRNLLGKRVDYSGRAVIVVGPHLKIHECGLPKKMAMELFKPFVLAELLNKDDETSKTARKMKKAIIEKEMPQAYEVLEEIIKGHPVLLNRAPTLHRMSLQAFEPKLIEGNAIQLHPLVCPPFNADFDGDQMAVHVPLSAAAQAEAKFLMLSRYNIISPAHGKPISMPGKDIVAGVYYLTMVGKDYDKVQKENIKWKFSSIDEAELAYEFGHIRLHDPILVKVDDRVIKTTYGRLVFANIVPREFRDYNKTYGKGAIKDLVYKTFKKYGVDRTADLLDDIKDLGFHYATISGLTVSITDFYISPERRRIIDEAKKKISEVEELFALGFLSDEERYRETIKIWADATEKVQDATFEYIGKDPFNPVYIMVDSGARGNKDQLKQLAGMRGLMADPSGRTIEIPIISNFREGLSVLEFFISTHGARKGSADTALRTSSAGYLTRRLVDVAQSVVITTTDCGTENGVRATVLKSSDGLTVEKLEDFLFGRVLAKDVYDPKTNSVLVNPENGKEYTRDTMIDDDDAKFLGNYSVRIPVSRELEINLTNPELPENYCELITDFIYDGVHYDEGTEVNWDIIRKAKNSGLEKLTVKEYPIVGKVSVETVVSQKDIKQLVVDEELIMPTTAKILEGHNVESVQVRPEIIVRSVLTCEAEHGVCSKCYGMDLSNHKIIGVGEAVGVVAAQSIGEPGTQLTMRTFHTGGIATTADITQGLPRAEELFEARKKLKEPEGIFSRVKGYVKDIVEDETGKKKVYIEDEAGDIHEYDIPTKVKVSVNKGQKILPGQSLSTGAIRPRKILETLDVDTTALYLLKEIKKVYVEQGVDIHDKHFEIIIKQMLDKVEVIDPGDTDYLPGDLLRLQMVKRINKQILEENVHVETNRKRVIGKILHQHLIAEDENGEIVEIAPEGVEVTEEILEKAIKSGIKEIIVKNGDGEIVTYQILPKEPIKYRRRLLRITKASLERVGWLSAASFQQTPQVLTEAAIEGSVDHLLGLKENVIVGQLIPAGTGLDMFANIQIEETPRLAQKEKMA.

4 residues coordinate Zn(2+): C63, C65, C78, and C81. D747, D749, and D751 together coordinate Mg(2+). 4 residues coordinate Zn(2+): C1078, C1269, C1276, and C1279.

Belongs to the RNA polymerase beta' chain family. The RNAP catalytic core consists of 2 alpha, 1 beta, 1 beta' and 1 omega subunit. When a sigma factor is associated with the core the holoenzyme is formed, which can initiate transcription. Mg(2+) is required as a cofactor. The cofactor is Zn(2+).

It catalyses the reaction RNA(n) + a ribonucleoside 5'-triphosphate = RNA(n+1) + diphosphate. In terms of biological role, DNA-dependent RNA polymerase catalyzes the transcription of DNA into RNA using the four ribonucleoside triphosphates as substrates. This is DNA-directed RNA polymerase subunit beta' from Thermosipho melanesiensis (strain DSM 12029 / CIP 104789 / BI429).